The sequence spans 218 residues: Large ribosomal subunit protein uL1 (218 aa).

The protein belongs to the universal ribosomal protein uL1 family. In terms of assembly, part of the 50S ribosomal subunit.

Its function is as follows. Binds directly to 23S rRNA. Probably involved in E site tRNA release. Functionally, protein L1 is also a translational repressor protein, it controls the translation of its operon by binding to its mRNA. The protein is Large ribosomal subunit protein uL1 of Metallosphaera sedula (strain ATCC 51363 / DSM 5348 / JCM 9185 / NBRC 15509 / TH2).